The chain runs to 612 residues: Actin-binding LIM protein 2 (612 aa).

4 LIM zinc-binding domains span residues 22–81 (ILCN…LYGT), 81–141 (TRCF…TLVG), 151–210 (RSCG…KFGI), and 210–270 (IRCD…ARTE). Zn(2+) contacts are provided by Cys83, Cys86, His103, Cys106, Cys109, Cys112, Cys131, and Cys134. Positions 212, 215, 232, 235, 238, 241, 260, and 263 each coordinate Zn(2+). Positions 269-278 (TEDKSKETRT) are enriched in basic and acidic residues. 2 disordered regions span residues 269–295 (TEDK…SGSP) and 341–433 (AVGD…DNIY). Low complexity-rich tracts occupy residues 279 to 295 (SSES…SGSP) and 364 to 373 (SSPSSAGSVS). Ser282, Ser294, Ser365, and Ser368 each carry phosphoserine. Residues 394 to 416 (SGRSTPSLSVHSDSRPPSSTYQQ) are compositionally biased toward polar residues. Ser453 carries the phosphoserine modification. Residues 471 to 520 (ADTRTNSPDLDSQSLSLSSGADQEPLQRMPGDSLYSRFPYSKPDTLPGPR) form a disordered region. At Thr473 the chain carries Phosphothreonine. Ser477 and Ser579 each carry phosphoserine. A compositionally biased stretch (low complexity) spans 477–489 (SPDLDSQSLSLSS). The 69-residue stretch at 544–612 (TREYKIYPYD…NDLKKKALLF (69 aa)) folds into the HP domain.

Interacts with F-actin and ABRA.

The protein localises to the cytoplasm. Its function is as follows. May act as scaffold protein. May stimulate ABRA activity and ABRA-dependent SRF transcriptional activity. This Rattus norvegicus (Rat) protein is Actin-binding LIM protein 2 (Ablim2).